A 755-amino-acid polypeptide reads, in one-letter code: Beta-galactosidase (755 aa).

The active-site Proton donor is E382. E463 (nucleophile) is an active-site residue.

It belongs to the glycosyl hydrolase 2 family.

It catalyses the reaction Hydrolysis of terminal non-reducing beta-D-galactose residues in beta-D-galactosides.. The polypeptide is Beta-galactosidase (lacZ) (Rhizobium meliloti (Ensifer meliloti)).